The chain runs to 213 residues: Virulence factor 1 (213 aa).

It is found in the host mitochondrion. Its function is as follows. Plays a role in antagonizing the host innate immune response. This chain is Virulence factor 1, found in Norovirus (isolate Mouse/NoV/United States/MNV1/2002/GV) (MNV-1).